The sequence spans 83 residues: Subtilisin-chymotrypsin inhibitor CI-1A (83 aa).

The tract at residues 1 to 24 is disordered; sequence MSSMEGSVLKYPEPTEGSIGASSA.

It belongs to the protease inhibitor I13 (potato type I serine protease inhibitor) family.

Its function is as follows. Inhibits both subtilisin and chymotrypsin. The protein is Subtilisin-chymotrypsin inhibitor CI-1A of Hordeum vulgare (Barley).